The sequence spans 417 residues: NADH-quinone oxidoreductase subunit D (417 aa).

It belongs to the complex I 49 kDa subunit family. In terms of assembly, NDH-1 is composed of 14 different subunits. Subunits NuoB, C, D, E, F, and G constitute the peripheral sector of the complex.

It localises to the cell inner membrane. It carries out the reaction a quinone + NADH + 5 H(+)(in) = a quinol + NAD(+) + 4 H(+)(out). In terms of biological role, NDH-1 shuttles electrons from NADH, via FMN and iron-sulfur (Fe-S) centers, to quinones in the respiratory chain. The immediate electron acceptor for the enzyme in this species is believed to be ubiquinone. Couples the redox reaction to proton translocation (for every two electrons transferred, four hydrogen ions are translocated across the cytoplasmic membrane), and thus conserves the redox energy in a proton gradient. This Acidithiobacillus ferrooxidans (strain ATCC 53993 / BNL-5-31) (Leptospirillum ferrooxidans (ATCC 53993)) protein is NADH-quinone oxidoreductase subunit D.